The following is a 73-amino-acid chain: Photosystem I reaction center subunit IV (73 aa).

It belongs to the PsaE family.

The protein resides in the cellular thylakoid membrane. Functionally, stabilizes the interaction between PsaC and the PSI core, assists the docking of the ferredoxin to PSI and interacts with ferredoxin-NADP oxidoreductase. The sequence is that of Photosystem I reaction center subunit IV from Synechococcus sp. (strain JA-3-3Ab) (Cyanobacteria bacterium Yellowstone A-Prime).